Here is a 200-residue protein sequence, read N- to C-terminus: GTP-binding protein rho2 (200 aa).

15–22 lines the GTP pocket; the sequence is GDGACGKT. An Effector region motif is present at residues 37–45; sequence YVPTVFENY. Residues 62 to 66 and 120 to 123 contribute to the GTP site; these read DTAGQ and MKAD. The residue at position 197 (cysteine 197) is a Cysteine methyl ester. Residue cysteine 197 is the site of S-geranylgeranyl cysteine attachment. Positions 198 to 200 are cleaved as a propeptide — removed in mature form; that stretch reads IIS.

This sequence belongs to the small GTPase superfamily. Rho family. As to quaternary structure, interacts with pck2.

The protein resides in the cell membrane. Functionally, involved in cell morphogenesis, the maintenance of growth direction, control of polarity and of cell wall integrity. Regulates the synthesis of alpha-D-glucan through activation of pck2. This Schizosaccharomyces pombe (strain 972 / ATCC 24843) (Fission yeast) protein is GTP-binding protein rho2 (rho2).